We begin with the raw amino-acid sequence, 156 residues long: Ribonuclease pancreatic (156 aa).

A signal peptide spans 1-28 (MALEKSLVLLPLFVLMLLVLGWVQPSLG). Residues lysine 35 and arginine 38 each contribute to the substrate site. Histidine 40 (proton acceptor) is an active-site residue. 2 N-linked (GlcNAc...) asparagine glycosylation sites follow: asparagine 50 and asparagine 62. Intrachain disulfides connect cysteine 54–cysteine 112, cysteine 68–cysteine 123, cysteine 86–cysteine 138, and cysteine 93–cysteine 100. Substrate contacts are provided by residues 69 to 73 (KPVNT) and lysine 94. An N-linked (GlcNAc...) asparagine glycan is attached at asparagine 104. Arginine 113 is a binding site for substrate. Asparagine 116 carries an N-linked (GlcNAc...) asparagine glycan. The active-site Proton donor is the histidine 147.

This sequence belongs to the pancreatic ribonuclease family. In terms of assembly, monomer. Interacts with and forms tight 1:1 complexes with RNH1. Dimerization of two such complexes may occur. Interaction with RNH1 inhibits this protein.

The protein resides in the secreted. The catalysed reaction is an [RNA] containing cytidine + H2O = an [RNA]-3'-cytidine-3'-phosphate + a 5'-hydroxy-ribonucleotide-3'-[RNA].. It catalyses the reaction an [RNA] containing uridine + H2O = an [RNA]-3'-uridine-3'-phosphate + a 5'-hydroxy-ribonucleotide-3'-[RNA].. Endonuclease that catalyzes the cleavage of RNA on the 3' side of pyrimidine nucleotides. Acts on single-stranded and double-stranded RNA. The sequence is that of Ribonuclease pancreatic (RNASE1) from Nomascus leucogenys (Northern white-cheeked gibbon).